The primary structure comprises 171 residues: N5-carboxyaminoimidazole ribonucleotide mutase (171 aa).

Substrate contacts are provided by serine 13, aspartate 16, and arginine 43.

The protein belongs to the AIR carboxylase family. Class I subfamily.

The catalysed reaction is 5-carboxyamino-1-(5-phospho-D-ribosyl)imidazole + H(+) = 5-amino-1-(5-phospho-D-ribosyl)imidazole-4-carboxylate. It participates in purine metabolism; IMP biosynthesis via de novo pathway; 5-amino-1-(5-phospho-D-ribosyl)imidazole-4-carboxylate from 5-amino-1-(5-phospho-D-ribosyl)imidazole (N5-CAIR route): step 2/2. Its function is as follows. Catalyzes the conversion of N5-carboxyaminoimidazole ribonucleotide (N5-CAIR) to 4-carboxy-5-aminoimidazole ribonucleotide (CAIR). The polypeptide is N5-carboxyaminoimidazole ribonucleotide mutase (Mycobacterium leprae (strain TN)).